The primary structure comprises 314 residues: Glycerol-1-phosphate dehydrogenase [NAD(P)+] (314 aa).

Residues 52-56 (GKPLD) and 74-77 (TSAS) contribute to the NAD(+) site. A substrate-binding site is contributed by aspartate 79. An NAD(+)-binding site is contributed by serine 83. Position 131 (aspartate 131) interacts with substrate. Residues aspartate 131 and histidine 211 each contribute to the Zn(2+) site. Substrate is bound at residue histidine 215. Histidine 231 contacts Zn(2+).

Belongs to the glycerol-1-phosphate dehydrogenase family. Zn(2+) is required as a cofactor.

The protein resides in the cytoplasm. It carries out the reaction sn-glycerol 1-phosphate + NAD(+) = dihydroxyacetone phosphate + NADH + H(+). The enzyme catalyses sn-glycerol 1-phosphate + NADP(+) = dihydroxyacetone phosphate + NADPH + H(+). It functions in the pathway membrane lipid metabolism; glycerophospholipid metabolism. In terms of biological role, catalyzes the NAD(P)H-dependent reduction of dihydroxyacetonephosphate (DHAP or glycerone phosphate) to glycerol 1-phosphate (G1P). The G1P thus generated is used as the glycerophosphate backbone of phospholipids in the cellular membranes of Archaea. The polypeptide is Glycerol-1-phosphate dehydrogenase [NAD(P)+] (Korarchaeum cryptofilum (strain OPF8)).